Consider the following 549-residue polypeptide: Glucose-6-phosphate isomerase (549 aa).

The active-site Proton donor is Glu-355. Residues His-387 and Lys-515 contribute to the active site.

Belongs to the GPI family.

Its subcellular location is the cytoplasm. The enzyme catalyses alpha-D-glucose 6-phosphate = beta-D-fructose 6-phosphate. The protein operates within carbohydrate biosynthesis; gluconeogenesis. It participates in carbohydrate degradation; glycolysis; D-glyceraldehyde 3-phosphate and glycerone phosphate from D-glucose: step 2/4. Functionally, catalyzes the reversible isomerization of glucose-6-phosphate to fructose-6-phosphate. The polypeptide is Glucose-6-phosphate isomerase (Mannheimia succiniciproducens (strain KCTC 0769BP / MBEL55E)).